A 210-amino-acid chain; its full sequence is HTH-type transcriptional regulator TtgR (210 aa).

The 61-residue stretch at 10-70 (QETRAQIIEA…ALLDSLHETH (61 aa)) folds into the HTH tetR-type domain. A DNA-binding region (H-T-H motif) is located at residues 33–52 (TLADIAELAGVTRGAIYWHF).

In terms of assembly, homodimer.

Represses expression from the ttgABC operon promoter and its own expression. Binds to a promoter region between the divergently transcribed ttgR and ttgABC genes/operons; in the presence of chloramphenicol or tetracycline this binding no longer occurs and ttgR and ttgABC are derepressed. This suggests that TtgR binds these antibiotics. The chain is HTH-type transcriptional regulator TtgR (ttgR) from Pseudomonas putida (strain DOT-T1E).